Reading from the N-terminus, the 525-residue chain is Putative ribose/galactose/methyl galactoside import ATP-binding protein (525 aa).

Positions 1 to 30 (MFGSATANPPAQRDLPSSDSDSPTPDAQPP) are disordered. The segment covering 14-25 (DLPSSDSDSPTP) has biased composition (low complexity). 2 ABC transporter domains span residues 33 to 269 (LEIS…VGRE) and 279 to 523 (KPPG…SGHK). 65 to 72 (GENGAGKS) provides a ligand contact to ATP.

It belongs to the ABC transporter superfamily. Carbohydrate importer 2 (CUT2) (TC 3.A.1.2) family.

It is found in the cell inner membrane. The catalysed reaction is D-ribose(out) + ATP + H2O = D-ribose(in) + ADP + phosphate + H(+). It carries out the reaction D-galactose(out) + ATP + H2O = D-galactose(in) + ADP + phosphate + H(+). Part of an ABC transporter complex involved in carbohydrate import. Could be involved in ribose, galactose and/or methyl galactoside import. Responsible for energy coupling to the transport system. This Pseudomonas savastanoi pv. phaseolicola (strain 1448A / Race 6) (Pseudomonas syringae pv. phaseolicola (strain 1448A / Race 6)) protein is Putative ribose/galactose/methyl galactoside import ATP-binding protein.